The sequence spans 337 residues: Pyrophosphate--fructose 6-phosphate 1-phosphotransferase (337 aa).

G10 provides a ligand contact to diphosphate. Residue D101 coordinates Mg(2+). Residues 124-126, R161, 168-170, E220, R257, and 263-266 each bind substrate; these read TID, MGR, and HTIR. D126 functions as the Proton acceptor in the catalytic mechanism.

The protein belongs to the phosphofructokinase type A (PFKA) family. Mixed-substrate PFK group III subfamily. As to quaternary structure, homodimer or homotrimer. Requires Mg(2+) as cofactor.

It is found in the cytoplasm. The enzyme catalyses beta-D-fructose 6-phosphate + diphosphate = beta-D-fructose 1,6-bisphosphate + phosphate + H(+). The protein operates within carbohydrate degradation; glycolysis; D-glyceraldehyde 3-phosphate and glycerone phosphate from D-glucose: step 3/4. Non-allosteric. In terms of biological role, catalyzes the phosphorylation of D-fructose 6-phosphate, the first committing step of glycolysis. Uses inorganic phosphate (PPi) as phosphoryl donor instead of ATP like common ATP-dependent phosphofructokinases (ATP-PFKs), which renders the reaction reversible, and can thus function both in glycolysis and gluconeogenesis. Consistently, PPi-PFK can replace the enzymes of both the forward (ATP-PFK) and reverse (fructose-bisphosphatase (FBPase)) reactions. This chain is Pyrophosphate--fructose 6-phosphate 1-phosphotransferase, found in Thermoproteus tenax (strain ATCC 35583 / DSM 2078 / JCM 9277 / NBRC 100435 / Kra 1).